Here is an 873-residue protein sequence, read N- to C-terminus: Alanine--tRNA ligase (873 aa).

Histidine 562, histidine 566, cysteine 663, and histidine 667 together coordinate Zn(2+).

It belongs to the class-II aminoacyl-tRNA synthetase family. Requires Zn(2+) as cofactor.

The protein resides in the cytoplasm. It catalyses the reaction tRNA(Ala) + L-alanine + ATP = L-alanyl-tRNA(Ala) + AMP + diphosphate. Its function is as follows. Catalyzes the attachment of alanine to tRNA(Ala) in a two-step reaction: alanine is first activated by ATP to form Ala-AMP and then transferred to the acceptor end of tRNA(Ala). Also edits incorrectly charged Ser-tRNA(Ala) and Gly-tRNA(Ala) via its editing domain. This chain is Alanine--tRNA ligase, found in Bordetella petrii (strain ATCC BAA-461 / DSM 12804 / CCUG 43448).